Consider the following 436-residue polypeptide: Enolase (436 aa).

2 residues coordinate substrate: histidine 159 and glutamate 168. Residue glutamate 211 is the Proton donor of the active site. Mg(2+)-binding residues include aspartate 246, glutamate 295, and aspartate 320. Positions 295 and 320 each coordinate substrate. Lysine 345 (proton acceptor) is an active-site residue. Substrate-binding positions include 372–375 (SHRS) and lysine 396.

The protein belongs to the enolase family. As to quaternary structure, homodimer. Mg(2+) serves as cofactor.

The protein localises to the cytoplasm. The enzyme catalyses (2R)-2-phosphoglycerate = phosphoenolpyruvate + H2O. It participates in carbohydrate degradation; glycolysis; pyruvate from D-glyceraldehyde 3-phosphate: step 4/5. The sequence is that of Enolase from Cunninghamella elegans.